Consider the following 394-residue polypeptide: Protein TsgA homolog (394 aa).

A run of 12 helical transmembrane segments spans residues 11-31 (WISF…GMVM), 51-71 (FLNT…EIIP), 76-96 (LVFG…GHNL), 101-121 (ACMF…TFLI), 134-154 (LLFT…IAAT), 160-180 (VAWY…FILT), 206-226 (IGVL…LGFI), 246-266 (GLVS…SVAL), 274-294 (IVTV…SSQQ), 297-317 (MLSM…TTLI), 334-354 (FILT…GPIV), and 363-383 (LATA…LGFV).

The protein belongs to the major facilitator superfamily. TsgA family.

The protein resides in the cell inner membrane. The chain is Protein TsgA homolog from Edwardsiella ictaluri (strain 93-146).